Consider the following 196-residue polypeptide: Aequorin-1 (196 aa).

Positions 1–7 are excised as a propeptide; the sequence is MTSEQYS. 4 consecutive EF-hand domains span residues 18 to 53, 54 to 108, 111 to 146, and 147 to 182; these read KWIG…IVIN, NLGA…SKNQ, LIRL…DGII, and QSSE…FWYT. Residues Asp31, Asn33, Asn35, Arg37, and Glu42 each contribute to the Ca(2+) site. 3 may interact with the chromophore regions span residues 47-57, 62-72, and 107-117; these read ASDIVINNLGA, AKRHKDAVEAF, and NQITLIRLWGD. Ca(2+) is bound by residues Asp124, Asp126, Asn128, Glu135, Asp160, Asp162, Ser164, Gln166, and Glu171.

This sequence belongs to the aequorin family. Post-translationally, the reduction of the disulfide bond is necessary to regenerate aequorin from apoaequorin.

Its function is as follows. Ca(2+)-dependent bioluminescence photoprotein. Displays an emission peak at 470 nm (blue light). Trace amounts of calcium ion trigger the intramolecular oxidation of the chromophore, coelenterazine into coelenteramide and CO(2) with the concomitant emission of light. In Aequorea victoria (Water jellyfish), this protein is Aequorin-1.